The sequence spans 124 residues: Competence protein ComGG (124 aa).

An N-terminal signal peptide occupies residues methionine 1–alanine 28.

As to quaternary structure, the transformation pili are flexible filaments, consisting mainly of the major pilin ComGC and smaller amounts of the minor pilins, including at least ComGD, ComGF and ComGG. Interacts with ComGC; the interaction is probably direct. Interacts with ComGD. Interacts with ComGF. May act as a link between ComGC, ComGD and ComGF. Homodimer; disulfide-linked. A minor fraction of ComGG is found as a disulfide-bonded homodimer. In terms of processing, partial processing of ComGG in competent cells requires ComC.

It localises to the cell membrane. Its subcellular location is the secreted. Required for formation of the type IV-like pilus (T4P) that plays a role in transformation. Transformation pili are dynamically extended and retracted, perhaps thereby promoting DNA uptake and transformation. Required for transformation and DNA binding. This Bacillus subtilis (strain 168) protein is Competence protein ComGG (comGG).